A 287-amino-acid polypeptide reads, in one-letter code: Glutamate racemase (287 aa).

Residues 32-33 and 64-65 each bind substrate; these read DS and YG. Catalysis depends on cysteine 96, which acts as the Proton donor/acceptor. Position 97 to 98 (97 to 98) interacts with substrate; the sequence is NT. Cysteine 208 functions as the Proton donor/acceptor in the catalytic mechanism. 209-210 serves as a coordination point for substrate; that stretch reads TH.

The protein belongs to the aspartate/glutamate racemases family.

It catalyses the reaction L-glutamate = D-glutamate. Its pathway is cell wall biogenesis; peptidoglycan biosynthesis. Provides the (R)-glutamate required for cell wall biosynthesis. This chain is Glutamate racemase, found in Photorhabdus laumondii subsp. laumondii (strain DSM 15139 / CIP 105565 / TT01) (Photorhabdus luminescens subsp. laumondii).